Here is a 154-residue protein sequence, read N- to C-terminus: Transcription antitermination protein NusB (154 aa).

It belongs to the NusB family.

Involved in transcription antitermination. Required for transcription of ribosomal RNA (rRNA) genes. Binds specifically to the boxA antiterminator sequence of the ribosomal RNA (rrn) operons. In Enterococcus faecalis (strain ATCC 700802 / V583), this protein is Transcription antitermination protein NusB.